We begin with the raw amino-acid sequence, 196 residues long: MFAELYIMSVESKHYASGTIYTPDGIQQFNGIFDDFDDVFNIKPTFATRIHCSHDEYCIDNGKTSFYYLTYKDIEDLKRMLTFMSGDSSAYLVYVPSDVIKELGINHSSSEITFSDVSIPRLEYIPCKFLGNIPTYIKLIGNTVYVNGVNVNMTVSDPDQLKELVNEIFRIYIIKYYKGLLTWSLILKMWCGIKIS.

This is an uncharacterized protein from Saccharolobus islandicus (Sulfolobus islandicus).